The following is a 518-amino-acid chain: Probable cytochrome P450 9h1 (518 aa).

Residue cysteine 462 coordinates heme.

It belongs to the cytochrome P450 family. Heme is required as a cofactor.

It is found in the endoplasmic reticulum membrane. It localises to the microsome membrane. Functionally, may be involved in the metabolism of insect hormones and in the breakdown of synthetic insecticides. This is Probable cytochrome P450 9h1 (Cyp9h1) from Drosophila melanogaster (Fruit fly).